Reading from the N-terminus, the 477-residue chain is uncharacterized protein (477 aa).

A helical transmembrane segment spans residues 107–129 (VNFWSLSMACASVLALLGLVYLI).

The protein localises to the membrane. This is an uncharacterized protein from Treponema pallidum (strain Nichols).